Here is a 588-residue protein sequence, read N- to C-terminus: Phomenoic acid biosynthesis cluster cytochrome P450 monooxygenase (588 aa).

Positions 1 to 21 (MSFARIFITILLLFILRRAFK) are cleaved as a signal peptide. N-linked (GlcNAc...) asparagine glycosylation occurs at Asn-293. Over residues 467-486 (HQSDPDRFKPSPDAPDEKLF) the composition is skewed to basic and acidic residues. Residues 467–490 (HQSDPDRFKPSPDAPDEKLFRPSR) form a disordered region. Heme is bound at residue Cys-519.

Belongs to the cytochrome P450 family. The cofactor is heme.

It functions in the pathway secondary metabolite biosynthesis. Its function is as follows. Cytochrome P450 monooxygenase; part of the gene cluster that mediates the biosynthesis of phomenoic acid, a long chain aliphatic carboxylic acid that does not appear to be essential for pathogenicity but may play a role in allowing to outcompete other fungi in the environmental niche via its antifungal properties. The polyketide synthase produces the long methylated aliphatic carboxylic acid chain of phomenoic acid. The cluster-specific cytochrome P450 monooxygenase may then hydroxylate the methyl group of carbon 31. The putative dehydrogenase YogA, which has no obvious role in phomenoic acid biosynthesis, may further modify phomenoic acid to produce a compound not identified yet. The polypeptide is Phomenoic acid biosynthesis cluster cytochrome P450 monooxygenase (Leptosphaeria maculans (strain JN3 / isolate v23.1.3 / race Av1-4-5-6-7-8) (Blackleg fungus)).